The primary structure comprises 451 residues: tRNA modification GTPase MnmE (451 aa).

Residues Arg28, Glu85, and Lys124 each contribute to the (6S)-5-formyl-5,6,7,8-tetrahydrofolate site. Positions 220 to 377 constitute a TrmE-type G domain; that stretch reads GMNVVLVGQP…LRSELLRVAG (158 aa). Asn230 is a K(+) binding site. Residues 230 to 235, 249 to 255, and 274 to 277 each bind GTP; these read NVGKSS, TDIAGTT, and DTAG. A Mg(2+)-binding site is contributed by Ser234. The K(+) site is built by Thr249, Ile251, and Thr254. Mg(2+) is bound at residue Thr255. Residue Lys451 participates in (6S)-5-formyl-5,6,7,8-tetrahydrofolate binding.

It belongs to the TRAFAC class TrmE-Era-EngA-EngB-Septin-like GTPase superfamily. TrmE GTPase family. As to quaternary structure, homodimer. Heterotetramer of two MnmE and two MnmG subunits. Requires K(+) as cofactor.

It localises to the cytoplasm. Exhibits a very high intrinsic GTPase hydrolysis rate. Involved in the addition of a carboxymethylaminomethyl (cmnm) group at the wobble position (U34) of certain tRNAs, forming tRNA-cmnm(5)s(2)U34. The chain is tRNA modification GTPase MnmE from Aromatoleum aromaticum (strain DSM 19018 / LMG 30748 / EbN1) (Azoarcus sp. (strain EbN1)).